The chain runs to 366 residues: tRNA/tmRNA (uracil-C(5))-methyltransferase (366 aa).

Positions 190, 218, 223, 239, and 299 each coordinate S-adenosyl-L-methionine. Cys-324 serves as the catalytic Nucleophile. The active-site Proton acceptor is Glu-358.

This sequence belongs to the class I-like SAM-binding methyltransferase superfamily. RNA M5U methyltransferase family. TrmA subfamily.

The catalysed reaction is uridine(54) in tRNA + S-adenosyl-L-methionine = 5-methyluridine(54) in tRNA + S-adenosyl-L-homocysteine + H(+). The enzyme catalyses uridine(341) in tmRNA + S-adenosyl-L-methionine = 5-methyluridine(341) in tmRNA + S-adenosyl-L-homocysteine + H(+). Dual-specificity methyltransferase that catalyzes the formation of 5-methyluridine at position 54 (m5U54) in all tRNAs, and that of position 341 (m5U341) in tmRNA (transfer-mRNA). This chain is tRNA/tmRNA (uracil-C(5))-methyltransferase, found in Escherichia fergusonii (strain ATCC 35469 / DSM 13698 / CCUG 18766 / IAM 14443 / JCM 21226 / LMG 7866 / NBRC 102419 / NCTC 12128 / CDC 0568-73).